The following is a 118-amino-acid chain: MPRVKGGTVTRARRKKTIKLAKGYFGSKHTLYKVAKQQVMKSGQYAFRDRRQRKRDFRKLWITRINAAARQHEMSYSRLMNGLKKAGIDINRKMLSEIAISDEKAFAQLVTKAKDALK.

It belongs to the bacterial ribosomal protein bL20 family.

Binds directly to 23S ribosomal RNA and is necessary for the in vitro assembly process of the 50S ribosomal subunit. It is not involved in the protein synthesizing functions of that subunit. This is Large ribosomal subunit protein bL20 from Staphylococcus aureus (strain Mu3 / ATCC 700698).